The chain runs to 125 residues: Small ribosomal subunit protein uS13 (125 aa).

Positions 92–125 are disordered; the sequence is RHRRGLPVRGQRTRTNARTRKGKKKTVGAQAKKK.

The protein belongs to the universal ribosomal protein uS13 family. As to quaternary structure, part of the 30S ribosomal subunit. Forms a loose heterodimer with protein S19. Forms two bridges to the 50S subunit in the 70S ribosome.

Located at the top of the head of the 30S subunit, it contacts several helices of the 16S rRNA. In the 70S ribosome it contacts the 23S rRNA (bridge B1a) and protein L5 of the 50S subunit (bridge B1b), connecting the 2 subunits; these bridges are implicated in subunit movement. Contacts the tRNAs in the A and P-sites. In Akkermansia muciniphila (strain ATCC BAA-835 / DSM 22959 / JCM 33894 / BCRC 81048 / CCUG 64013 / CIP 107961 / Muc), this protein is Small ribosomal subunit protein uS13.